We begin with the raw amino-acid sequence, 817 residues long: DNA replication licensing factor Mcm6 (817 aa).

The C4-type zinc finger occupies 152 to 179 (CLDCQTEIRNVEQQFKFTNPTICRNPVC). Residues 338 to 544 (LYQNLISSLF…VVDYAIARKI (207 aa)) form the MCM domain. Ser-391, Thr-392, Ala-393, Lys-394, Ser-395, and Asn-496 together coordinate ATP. The short motif at 520–523 (SRFD) is the Arginine finger element. Positions 611 and 614 each coordinate ADP.

It belongs to the MCM family. As to quaternary structure, component of the Mcm2-7 complex. The complex forms a toroidal hexameric ring with the proposed subunit order Mcm2-Mcm6-Mcm4-Mcm7-Mcm3-Mcm5. The heterodimers of Mcm4/Mcm6 and Mcm3/Mcm5 interact with Mcm2 and Mcm7. In terms of tissue distribution, in stage 12 embryos, strongly expressed in the CNS and weakly in the gut.

It localises to the nucleus. The enzyme catalyses ATP + H2O = ADP + phosphate + H(+). Functionally, acts as a component of the Mcm2-7 complex (Mcm complex) which is the putative replicative helicase essential for 'once per cell cycle' DNA replication initiation and elongation in eukaryotic cells. Core component of CDC45-MCM-GINS (CMG) helicase, the molecular machine that unwinds template DNA during replication, and around which the replisome is built. The active ATPase sites in the Mcm2-7 ring are formed through the interaction surfaces of two neighboring subunits such that a critical structure of a conserved arginine finger motif is provided in trans relative to the ATP-binding site of the Walker A box of the adjacent subunit. The six ATPase active sites, however, are likely to contribute differentially to the complex helicase activity Required for DNA replication and cell proliferation. Required for mitotic cycles, endocycles, and the special S phase associated with the amplification of chorion genes; has a role in origin unwinding or fork elongation at chorion loci. The protein is DNA replication licensing factor Mcm6 of Drosophila melanogaster (Fruit fly).